Here is a 432-residue protein sequence, read N- to C-terminus: Phosphomethylpyrimidine synthase (432 aa).

Residues Asn66, Met95, Tyr124, His163, 185 to 187 (SRG), 226 to 229 (DGLR), and Glu265 contribute to the substrate site. A Zn(2+)-binding site is contributed by His269. Tyr292 contacts substrate. His333 serves as a coordination point for Zn(2+). Positions 409, 412, and 416 each coordinate [4Fe-4S] cluster.

This sequence belongs to the ThiC family. The cofactor is [4Fe-4S] cluster.

It catalyses the reaction 5-amino-1-(5-phospho-beta-D-ribosyl)imidazole + S-adenosyl-L-methionine = 4-amino-2-methyl-5-(phosphooxymethyl)pyrimidine + CO + 5'-deoxyadenosine + formate + L-methionine + 3 H(+). The protein operates within cofactor biosynthesis; thiamine diphosphate biosynthesis. Its function is as follows. Catalyzes the synthesis of the hydroxymethylpyrimidine phosphate (HMP-P) moiety of thiamine from aminoimidazole ribotide (AIR) in a radical S-adenosyl-L-methionine (SAM)-dependent reaction. The chain is Phosphomethylpyrimidine synthase from Desulforamulus reducens (strain ATCC BAA-1160 / DSM 100696 / MI-1) (Desulfotomaculum reducens).